We begin with the raw amino-acid sequence, 251 residues long: 5'-nucleotidase SurE (251 aa).

A divalent metal cation is bound by residues Asp9, Asp10, Ser40, and Asn94.

This sequence belongs to the SurE nucleotidase family. A divalent metal cation is required as a cofactor.

The protein localises to the cytoplasm. The enzyme catalyses a ribonucleoside 5'-phosphate + H2O = a ribonucleoside + phosphate. Functionally, nucleotidase that shows phosphatase activity on nucleoside 5'-monophosphates. This chain is 5'-nucleotidase SurE, found in Aquifex aeolicus (strain VF5).